The primary structure comprises 125 residues: Large ribosomal subunit protein bL19 (125 aa).

This sequence belongs to the bacterial ribosomal protein bL19 family.

Its function is as follows. This protein is located at the 30S-50S ribosomal subunit interface and may play a role in the structure and function of the aminoacyl-tRNA binding site. The chain is Large ribosomal subunit protein bL19 from Wolbachia sp. subsp. Brugia malayi (strain TRS).